The sequence spans 1230 residues: Cullin-associated NEDD8-dissociated protein 1 (1230 aa).

The residue at position 2 (Ala2) is an N-acetylalanine. HEAT repeat units lie at residues 2–39 (ASAS…KDSI), 44–81 (DSER…KVKE), 83–119 (QVET…ELPP), 131–165 (CKKI…LSRQ), 171–208 (NFHP…SCGN), 210–247 (VFVG…QAGH), 248–282 (RIGE…FESF), 289–366 (EVYP…TRHE), 370–407 (EFYK…QTRP), 424–467 (PLTM…VLPG), 471–510 (QHIP…NHSP), and 515–552 (PHVQ…VIRP). Lys55 bears the N6-acetyllysine mark. Positions 315–343 (DEDEDENAMDADGGDDDDQGSDDEYSDDG) are disordered. Ser335 bears the Phosphoserine mark. Position 558 is a phosphoserine (Ser558). HEAT repeat units lie at residues 563–602 (PYIK…NLGD), 606–643 (SDLP…LKID), 646–683 (PVLG…NYSD), 688–725 (AMID…VYPS), 729–768 (KISG…TGTN), 770–808 (LGYM…ALTR), 809–845 (ACPK…LGEV), 852–889 (SGQL…GNLP), 890–927 (EYLP…GLKP), 928–960 (YVEN…KLTL), 961–998 (IDPE…DHPQ), 1002–1039 (PLLK…NKPS), 1043–1097 (DLLD…DSCL), 1099–1133 (RLDI…LSTL), and 1140–1189 (QRLD…IPEA). Lys971 is modified (N6-acetyllysine).

It belongs to the CAND family. As to quaternary structure, interacts with TBP. Part of a complex that contains CUL1 and RBX1. Interacts with unneddylated cullins: interacts with CUL1, CUL2, CUL3, CUL4A, CUL4B and CUL5. Does not bind neddylated CUL1. Interaction with cullins is abolished in presence of COMMD1, which antagonizes with CAND1 for interacting with cullins. Interacts with ERCC6. Interacts with DCUN1D1, DCUN1D2, DCUN1D3, DCUN1D4 and DCUN1D5; these interactions are bridged by cullins and strongly inhibits the neddylation of cullins.

The protein localises to the cytoplasm. The protein resides in the nucleus. Functionally, key assembly factor of SCF (SKP1-CUL1-F-box protein) E3 ubiquitin ligase complexes that promotes the exchange of the substrate-recognition F-box subunit in SCF complexes, thereby playing a key role in the cellular repertoire of SCF complexes. Acts as a F-box protein exchange factor. The exchange activity of CAND1 is coupled with cycles of neddylation conjugation: in the deneddylated state, cullin-binding CAND1 binds CUL1-RBX1, increasing dissociation of the SCF complex and promoting exchange of the F-box protein. Probably plays a similar role in other cullin-RING E3 ubiquitin ligase complexes. This chain is Cullin-associated NEDD8-dissociated protein 1 (CAND1), found in Pongo abelii (Sumatran orangutan).